The following is a 423-amino-acid chain: MKVDVLLGLQWGDEGKGKVVDVLTPNYDVVTRFQGGPNAGHTLEFNGEKYVLRSIPSGIFQGGKINVIGNGVVLDPLLFKQEAESLAASGHDITKQLYISKKAHLILPTHRILDAAYEAAKGSGKIGTTGKGIGPTYTDKISRNGVRVGDLLHNFEEKYAAAKAKHEAILRSLNYEYDITEMEAQWLEALNYLRQFKLIDSEHVINNYLKEGKSVLAEGAQGTMLDIDFGSYPFVTSSNTICAGCCTGLGVSPRNIGEVYGIFKAYCTRVGSGPFPTELFDEVGDKIGQLGHEFGAVTGRKRRCGWIDLVALRYAVMINGVSQLIMMKSDVLDTFDTIKACVAYKMNGVETNEFPYEIDDTIEPVYVELPGWKTDMTKMRSEDEFPEEFNAYLSFLEEELGVPVKIVSVGPDREQTIVRYTEE.

Residues glycine 12–lysine 18 and glycine 40–threonine 42 contribute to the GTP site. Residue aspartate 13 is the Proton acceptor of the active site. Residues aspartate 13 and glycine 40 each contribute to the Mg(2+) site. IMP is bound by residues aspartate 13 to lysine 16, asparagine 38 to histidine 41, threonine 129, arginine 143, glutamine 221, threonine 236, and arginine 300. Histidine 41 (proton donor) is an active-site residue. Substrate is bound at residue alanine 296–arginine 302. GTP-binding positions include arginine 302, lysine 328–aspartate 330, and serine 408–glycine 410.

It belongs to the adenylosuccinate synthetase family. In terms of assembly, homodimer. Requires Mg(2+) as cofactor.

It localises to the cytoplasm. It catalyses the reaction IMP + L-aspartate + GTP = N(6)-(1,2-dicarboxyethyl)-AMP + GDP + phosphate + 2 H(+). Its pathway is purine metabolism; AMP biosynthesis via de novo pathway; AMP from IMP: step 1/2. In terms of biological role, plays an important role in the de novo pathway of purine nucleotide biosynthesis. Catalyzes the first committed step in the biosynthesis of AMP from IMP. This is Adenylosuccinate synthetase from Parabacteroides distasonis (strain ATCC 8503 / DSM 20701 / CIP 104284 / JCM 5825 / NCTC 11152).